The sequence spans 492 residues: Dipeptide and tripeptide permease A (492 aa).

The Cytoplasmic segment spans residues 1–20; sequence MSTANKHPEAASLNAFKQPR. Residues 21-43 form a helical membrane-spanning segment; it reads SFYLIFSIELWERFGYYGLQGIM. Over 44 to 58 the chain is Periplasmic; the sequence is AVYLVKMLGMSEAQS. The chain crosses the membrane as a helical span at residues 59-79; the sequence is ITLFASFSALVYGLIAVGGWL. Topologically, residues 80 to 88 are cytoplasmic; the sequence is GDKVLGTKR. A helical transmembrane segment spans residues 89–109; sequence VIVLGTLVLALGYALVAWSGH. A topological domain (periplasmic) is located at residue Asp110. The chain crosses the membrane as a helical span at residues 111 to 131; that stretch reads IAMIYFGMATIAVGNGLFKAN. Residues 132–152 are Cytoplasmic-facing; it reads PSSLLSTCYEKDDPRLDGAFT. Residues 153–173 form a helical membrane-spanning segment; the sequence is MYYMAINIGSFFSMLATPWLA. The Periplasmic segment spans residues 174–178; sequence AQFGW. Residues 179 to 199 form a helical membrane-spanning segment; the sequence is STAFGLSFVGMLITLVNFMFF. The Cytoplasmic segment spans residues 200 to 217; it reads RKWVKDHGSKPDFAPLNM. Residues 218 to 238 form a helical membrane-spanning segment; the sequence is GKLLVTLLGIAVMIAAATWLL. Residues 239–245 are Periplasmic-facing; the sequence is HNQDIAR. Residues 246-266 form a helical membrane-spanning segment; sequence MVLGAVAVAIVVIFTKEALTL. Over 267 to 273 the chain is Cytoplasmic; sequence KGAARRK. A helical transmembrane segment spans residues 274 to 294; sequence MIVAFLLMLEAIVFFVLYMQM. Topologically, residues 295 to 319 are periplasmic; that stretch reads PTSLNFFAIRNVEHSLLGIAFQPEQ. The helical transmembrane segment at 320–340 threads the bilayer; that stretch reads FQALNPFWIMIFSPLLAALYN. The Cytoplasmic segment spans residues 341 to 351; that stretch reads KLGDRMPMPHK. A helical transmembrane segment spans residues 352–372; sequence FALGMVLCSAAFLVLPLGASL. Topologically, residues 373–377 are periplasmic; that stretch reads ANKMG. Residues 378–398 form a helical membrane-spanning segment; the sequence is IVSVGWLVLSYALQSVGELMI. Residues 399–413 lie on the Cytoplasmic side of the membrane; sequence SGLGLAMVAQLVPQR. Residues 414 to 434 form a helical membrane-spanning segment; sequence LMGFIMGSWFLTTAGAAMVAG. Residues 435-458 lie on the Periplasmic side of the membrane; sequence KVANLMAVPENITNPLLSLHVYGD. Residues 459 to 479 form a helical membrane-spanning segment; sequence IFFKIGITTGVIAVLMILAAP. At 480–492 the chain is on the cytoplasmic side; that stretch reads LLNRMTQDEQPGV.

It belongs to the major facilitator superfamily. Proton-dependent oligopeptide transporter (POT/PTR) (TC 2.A.17) family. DtpA subfamily.

The protein resides in the cell inner membrane. Proton-dependent permease that transports di- and tripeptides. This Erwinia pyrifoliae (strain DSM 12163 / CIP 106111 / Ep16/96) protein is Dipeptide and tripeptide permease A.